Reading from the N-terminus, the 574-residue chain is Proline--tRNA ligase (574 aa).

This sequence belongs to the class-II aminoacyl-tRNA synthetase family. ProS type 1 subfamily. Homodimer.

The protein localises to the cytoplasm. It catalyses the reaction tRNA(Pro) + L-proline + ATP = L-prolyl-tRNA(Pro) + AMP + diphosphate. Catalyzes the attachment of proline to tRNA(Pro) in a two-step reaction: proline is first activated by ATP to form Pro-AMP and then transferred to the acceptor end of tRNA(Pro). As ProRS can inadvertently accommodate and process non-cognate amino acids such as alanine and cysteine, to avoid such errors it has two additional distinct editing activities against alanine. One activity is designated as 'pretransfer' editing and involves the tRNA(Pro)-independent hydrolysis of activated Ala-AMP. The other activity is designated 'posttransfer' editing and involves deacylation of mischarged Ala-tRNA(Pro). The misacylated Cys-tRNA(Pro) is not edited by ProRS. In Thioalkalivibrio sulfidiphilus (strain HL-EbGR7), this protein is Proline--tRNA ligase.